Consider the following 56-residue polypeptide: Large ribosomal subunit protein bL33 (56 aa).

The protein belongs to the bacterial ribosomal protein bL33 family.

This is Large ribosomal subunit protein bL33 from Beutenbergia cavernae (strain ATCC BAA-8 / DSM 12333 / CCUG 43141 / JCM 11478 / NBRC 16432 / NCIMB 13614 / HKI 0122).